Reading from the N-terminus, the 446-residue chain is Phosphoglucosamine mutase (446 aa).

Serine 101 (phosphoserine intermediate) is an active-site residue. Mg(2+)-binding residues include serine 101, aspartate 240, aspartate 242, and aspartate 244. Serine 101 bears the Phosphoserine mark.

The protein belongs to the phosphohexose mutase family. Mg(2+) is required as a cofactor. Post-translationally, activated by phosphorylation.

The enzyme catalyses alpha-D-glucosamine 1-phosphate = D-glucosamine 6-phosphate. Its function is as follows. Catalyzes the conversion of glucosamine-6-phosphate to glucosamine-1-phosphate. The sequence is that of Phosphoglucosamine mutase from Coxiella burnetii (strain CbuK_Q154) (Coxiella burnetii (strain Q154)).